A 141-amino-acid chain; its full sequence is Large ribosomal subunit protein uL11 (141 aa).

Belongs to the universal ribosomal protein uL11 family. As to quaternary structure, part of the ribosomal stalk of the 50S ribosomal subunit. Interacts with L10 and the large rRNA to form the base of the stalk. L10 forms an elongated spine to which L12 dimers bind in a sequential fashion forming a multimeric L10(L12)X complex. One or more lysine residues are methylated.

Forms part of the ribosomal stalk which helps the ribosome interact with GTP-bound translation factors. This is Large ribosomal subunit protein uL11 from Alkaliphilus metalliredigens (strain QYMF).